The chain runs to 538 residues: Ribosome-associated complex subunit SSZ1 (538 aa).

Positions 400 to 538 (PVIVNTPHLK…KTGNAVKGEL (139 aa)) are peptide-binding domain. The disordered stretch occupies residues 464-484 (PIPKEENAEEDDESEWSDDEP). Over residues 470–484 (NAEEDDESEWSDDEP) the composition is skewed to acidic residues. 2 positions are modified to phosphoserine: Ser477 and Ser480.

Belongs to the heat shock protein 70 family. As to quaternary structure, RAC is a heterodimer of the Hsp70/DnaK-type chaperone SSZ1 and the Hsp40/DnaJ-type chaperone ZUO1. RAC associates with ribosomes via ZUO1.

The protein resides in the cytoplasm. Its function is as follows. Component of the ribosome-associated complex (RAC), a heterodimeric chaperone complex involved in regulation of accurate translation termination and in folding or maintaining nascent polypeptides in a folding-competent state. RAC stimulates the ATPase activity of the ribosome-associated pool of Hsp70-type chaperones SSB1/SSB2 that bind to the nascent polypeptide chain. SSZ1 is required for ZUO1 to function efficiently as a J-protein for SSB1/SSB2. Also involved in pleiotropic drug resistance by post-translational activation of transcription factor PDR1. The chain is Ribosome-associated complex subunit SSZ1 (SSZ1) from Saccharomyces cerevisiae (strain ATCC 204508 / S288c) (Baker's yeast).